A 487-amino-acid polypeptide reads, in one-letter code: Kynureninase 1 (487 aa).

Residues L147, T148, 175 to 178, S232, D261, H264, and Y286 contribute to the pyridoxal 5'-phosphate site; that span reads FPSD. K287 carries the post-translational modification N6-(pyridoxal phosphate)lysine. 2 residues coordinate pyridoxal 5'-phosphate: W327 and N355.

It belongs to the kynureninase family. In terms of assembly, homodimer. Pyridoxal 5'-phosphate serves as cofactor.

Its subcellular location is the cytoplasm. The enzyme catalyses L-kynurenine + H2O = anthranilate + L-alanine + H(+). It carries out the reaction 3-hydroxy-L-kynurenine + H2O = 3-hydroxyanthranilate + L-alanine + H(+). It participates in amino-acid degradation; L-kynurenine degradation; L-alanine and anthranilate from L-kynurenine: step 1/1. The protein operates within cofactor biosynthesis; NAD(+) biosynthesis; quinolinate from L-kynurenine: step 2/3. Its function is as follows. Catalyzes the cleavage of L-kynurenine (L-Kyn) and L-3-hydroxykynurenine (L-3OHKyn) into anthranilic acid (AA) and 3-hydroxyanthranilic acid (3-OHAA), respectively. This chain is Kynureninase 1 (bna5-1), found in Aspergillus oryzae (strain ATCC 42149 / RIB 40) (Yellow koji mold).